The following is a 2581-amino-acid chain: Highly reducing polyketide synthase sorA (2581 aa).

A Ketosynthase family 3 (KS3) domain is found at 14–436; it reads SEPIAIIGMS…GSNAHIILED (423 aa). Catalysis depends on for beta-ketoacyl synthase activity residues Cys187, His322, and His359. Residues 574–868 form a malonyl-CoA:ACP transacylase (MAT) domain region; it reads VFTGQGAQWN…VVEVGPHTAL (295 aa). The tract at residues 966-1103 is N-terminal hotdog fold; that stretch reads HDLLGSIVEG…GLVSVELGES (138 aa). The dehydratase (DH) domain stretch occupies residues 966-1270; the sequence is HDLLGSIVEG…GFSYQSLGRS (305 aa). The 308-residue stretch at 966–1273 folds into the PKS/mFAS DH domain; the sequence is HDLLGSIVEG…YQSLGRSTSL (308 aa). Catalysis depends on His998, which acts as the Proton acceptor; for dehydratase activity. The interval 1119–1273 is C-terminal hotdog fold; that stretch reads TRRILPADLF…YQSLGRSTSL (155 aa). Catalysis depends on Asp1184, which acts as the Proton donor; for dehydratase activity. A methyltransferase (CMet) domain region spans residues 1461–1568; that stretch reads LEVGAATGAI…SSLLKPGGTL (108 aa). Positions 1873–2184 are enoyl reductase (ER)domain; that stretch reads LKPDLLVFGD…AGDQIGKVVL (312 aa). Positions 2207–2389 are ketoreductase (KR) domain; it reads VSYLIVGGSG…AVSIDLSVVN (183 aa). In terms of domain architecture, Carrier spans 2497–2574; it reads DAVRVVGTAI…QLAIDVVDRS (78 aa). Position 2534 is an O-(pantetheine 4'-phosphoryl)serine (Ser2534).

It functions in the pathway secondary metabolite biosynthesis. Functionally, highly reducing polyketide synthase; part of the gene cluster that mediates the biosynthesis of sorbicillinoids, a diverse group of yellow secondary metabolites that restrict growth of competing pathogenic fungi but not of bacteria. Sorbicillinoids biosynthesis requires the action of two PKSs. SorA iteratively combines three acetyl units and the growing chain is modified by the ketoacyl reductase subunit, and optional by the enoyl reductase subunit in the second cycle. The polyketide is then handed over to the PKS SorB, which adds three more acetyl units, and two methyl groups. SorB releases an aldehyde, which undergoes spontaneous cyclization resulting in the formation of sorbicillin or 2',3'-dihydrosorbicillin. The monooxygenase sorC oxidizes sorbicillin and 2',3'-dihydrosorbicillin to 2',3'-dihydrosorbicillinol and sorbicillinol, respectively. The oxidoreductase sorD further converts sorbicillinol into oxosorbicillinol. Sorbicillinol is the building block for the other sorbicillinoids such as disorbicillinol, bisvertinolon, and dihydrobisvertinolone. In Penicillium rubens (strain ATCC 28089 / DSM 1075 / NRRL 1951 / Wisconsin 54-1255) (Penicillium chrysogenum), this protein is Highly reducing polyketide synthase sorA.